We begin with the raw amino-acid sequence, 445 residues long: Tryptophan 5-hydroxylase 1 (445 aa).

Residues 19 to 94 enclose the ACT domain; the sequence is AIIFSLKNEV…SIVSMNPTEH (76 aa). Serine 58 is subject to Phosphoserine; by PKA. Tyrosine 236, arginine 258, and threonine 266 together coordinate L-tryptophan. 3 residues coordinate Fe cation: histidine 273, histidine 278, and glutamate 318. L-tryptophan contacts are provided by serine 337 and isoleucine 367.

Belongs to the biopterin-dependent aromatic amino acid hydroxylase family. Homotetramer. Fe(2+) serves as cofactor.

It carries out the reaction (6R)-L-erythro-5,6,7,8-tetrahydrobiopterin + L-tryptophan + O2 = 5-hydroxy-L-tryptophan + (4aS,6R)-4a-hydroxy-L-erythro-5,6,7,8-tetrahydrobiopterin. It functions in the pathway aromatic compound metabolism; serotonin biosynthesis; serotonin from L-tryptophan: step 1/2. Oxidizes L-tryptophan to 5-hydroxy-l-tryptophan in the rate-determining step of serotonin biosynthesis. The sequence is that of Tryptophan 5-hydroxylase 1 (TPH1) from Gallus gallus (Chicken).